The chain runs to 421 residues: Probable mitochondrial chaperone BCS1-A (421 aa).

Residues 1–10 (MNHLKDQSKS) are Mitochondrial intermembrane-facing. Residues 11 to 31 (IVLGISSGIGIFLISGGINIF) traverse the membrane as a helical segment. Residues 32-421 (KNVGQYILNR…VQSITPFNLN (390 aa)) lie on the Mitochondrial matrix side of the membrane. An ATP-binding site is contributed by 228 to 235 (GEPGNGKS).

This sequence belongs to the AAA ATPase family. BCS1 subfamily.

It localises to the mitochondrion inner membrane. It carries out the reaction ATP + H2O = ADP + phosphate + H(+). Its function is as follows. Chaperone necessary for the assembly of mitochondrial respiratory chain complex III. The sequence is that of Probable mitochondrial chaperone BCS1-A (bcs1la) from Dictyostelium discoideum (Social amoeba).